Reading from the N-terminus, the 351-residue chain is Basic salivary proline-rich protein 3 (351 aa).

An N-terminal signal peptide occupies residues 1–16 (MLLILLSVALLALSSA). Pyrrolidone carboxylic acid is present on glutamine 17. The segment at 17–351 (QSLNEDVSQE…HRPPQGQPPQ (335 aa)) is disordered. Positions 20–31 (NEDVSQEESPSV) are enriched in polar residues. Residue serine 24 is modified to Phosphoserine. Repeat copies occupy residues 53-73 (PPGK…GPPP), 74-94 (RPGK…GPPP), 95-115 (RPGK…GPPP), 116-136 (RPGK…GPPP), 137-157 (RPGK…GPPP), 158-178 (RPGK…GPPP), 179-199 (HPGK…GPPP), 200-220 (RPGK…GPPP), 221-241 (RPGK…GPPP), 242-261 (RPGK…QGPP), 263-283 (RPGK…GPPP), and 284-304 (HPGK…RPPP). The 12 X 21 AA tandem repeats of [RHP]-P-G-K-P-[EQ]-G-[PQS]-P-[PS]-Q-[GE]-G-N-[QK]-[SP]-[QR]-[GR]-P-P-P stretch occupies residues 53–304 (PPGKPEGRPP…EGNKPQRPPP (252 aa)). The N-linked (GlcNAc...) asparagine glycan is linked to asparagine 66. The segment covering 70–84 (GPPPRPGKPEGPPPQ) has biased composition (pro residues). N-linked (GlcNAc...) asparagine glycosylation is present at asparagine 87. Serine 89 is a glycosylation site (O-linked (Hex) serine). The span at 99-111 (PEGQPPQGGNQSQ) shows a compositional bias: low complexity. Asparagine 108 carries an N-linked (GlcNAc...) asparagine glycan. The span at 112-126 (GPPPRPGKPEGPPPQ) shows a compositional bias: pro residues. Asparagine 129 carries N-linked (GlcNAc...) asparagine glycosylation. Positions 133 to 147 (GPPPRPGKPEGPPPQ) are enriched in pro residues. The N-linked (GlcNAc...) asparagine glycan is linked to asparagine 150. Composition is skewed to pro residues over residues 154 to 168 (GPPP…PPPQ) and 175 to 189 (GPPP…PPPQ). A glycan (N-linked (GlcNAc...) asparagine) is linked at asparagine 192. Pro residues predominate over residues 196 to 210 (GPPPRPGKPEGPPPQ). 2 N-linked (GlcNAc...) asparagine glycosylation sites follow: asparagine 213 and asparagine 234. Composition is skewed to pro residues over residues 217 to 252 (GPPP…PPPQ), 259 to 270 (GPPPRPGKPEGP), and 279 to 351 (QGPP…QPPQ). N-linked (Hex) asparagine; atypical glycosylation is present at asparagine 297.

In terms of processing, N- and O-glycosylated; contains about 50% carbohydrate. This is composed of highly fucosylated N-linked saccharides, the major structure is a biantennary asialosaccharide containing 2 fucose residues on one antenna and an unsubstituted terminal lactosamine sequence on the other. The Gram-negative bacterium F.nucleatum binds to carbohydrates containing unsubstituted GalBeta1,4GlcNAc residues. N-glycosylation on Asn-87 is prevalent in head and neck cancer patients. Proteolytically cleaved at the tripeptide Xaa-Pro-Gln, where Xaa in the P(3) position is mostly lysine. The endoprotease may be of microbial origin. Besides on the N-terminal of mature PRB3, pyroglutamate formation found on at least Gln-67, Gln-88, Gln-256 and Gln-337.

The protein resides in the secreted. Acts as a receptor for the Gram-negative bacterium F.nucleatum. The protein is Basic salivary proline-rich protein 3 (PRB3) of Homo sapiens (Human).